Consider the following 417-residue polypeptide: Phosphoglycerate kinase, cytosolic (417 aa).

V23, D24, F25, N26, R39, S61, H62, G64, R65, R132, H168, and R169 together coordinate (2R)-3-phosphoglycerate. G214 and A215 together coordinate ADP. CDP is bound at residue G214. AMP is bound by residues A215 and K216. Residue A215 coordinates ATP. A215 is a Mg(2+) binding site. Position 216 (K216) interacts with (2R)-3-phosphoglycerate. D219 is a CDP binding site. D219 lines the Mg(2+) pocket. K220 and G238 together coordinate ADP. K220 is a binding site for AMP. K220 contributes to the ATP binding site. Residue G238 participates in CDP binding. Residues A239 and A311 each contribute to the AMP site. ATP is bound by residues A239 and A311. A311 and N335 together coordinate ADP. Residues G336 and F341 each coordinate CDP. Positions 341, 342, 374, and 375 each coordinate ADP. E342 contributes to the AMP binding site. The ATP site is built by E342, D374, and T375. D374 contacts Mg(2+).

It belongs to the phosphoglycerate kinase family. Monomer. Mg(2+) is required as a cofactor.

It is found in the cytoplasm. The enzyme catalyses (2R)-3-phosphoglycerate + ATP = (2R)-3-phospho-glyceroyl phosphate + ADP. The protein operates within carbohydrate degradation; glycolysis; pyruvate from D-glyceraldehyde 3-phosphate: step 2/5. In Crithidia fasciculata, this protein is Phosphoglycerate kinase, cytosolic (PGKB).